Consider the following 442-residue polypeptide: Putative pyrimidine permease RutG (442 aa).

The Cytoplasmic portion of the chain corresponds to 1–57 (MAMFGFPHWQLKSTSTESGVVAPDERLPFAQTAVMGVQHAVAMFGATVLMPILMGLD). A helical membrane pass occupies residues 58–78 (PNLSILMSGIGTLLFFFITGG). A topological domain (periplasmic) is located at residue R79. A helical membrane pass occupies residues 80–100 (VPSYLGSSAAFVGVVIAATGF). Residues 101 to 110 (NGQGINPNIS) lie on the Cytoplasmic side of the membrane. The helical transmembrane segment at 111-131 (IALGGIIACGLVYTVIGLVVM) threads the bilayer. Over 132 to 140 (KIGTRWIER) the chain is Periplasmic. Residues 141-161 (LMPPVVTGAVVMAIGLNLAPI) traverse the membrane as a helical segment. Over 162 to 169 (AVKSVSAS) the chain is Cytoplasmic. Residues 170-190 (AFDSWMAVMTVLCIGLVAVFT) form a helical membrane-spanning segment. Residues 191 to 196 (RGMIQR) lie on the Periplasmic side of the membrane. The helical transmembrane segment at 197–217 (LLILVGLIVACLLYGVMTNVL) threads the bilayer. Residues 218–240 (GLGKAVDFTLVSHAAWFGLPHFS) are Cytoplasmic-facing. The helical transmembrane segment at 241-261 (TPAFNGQAMMLIAPVAVILVA) threads the bilayer. At 262–284 (ENLGHLKAVAGMTGRNMDPYMGR) the chain is on the periplasmic side. A helical transmembrane segment spans residues 285–305 (AFVGDGLATMLSGSVGGSGVT). Over 306-318 (TYAENIGVMAVTK) the chain is Cytoplasmic. Residues 319–339 (VYSTLVFVAAAVIAMLLGFSP) traverse the membrane as a helical segment. Over 340 to 347 (KFGALIHT) the chain is Periplasmic. Residues 348 to 368 (IPAAVIGGASIVVFGLIAVAG) form a helical membrane-spanning segment. Over 369-385 (ARIWVQNRVDLSQNGNL) the chain is Cytoplasmic. 2 helical membrane-spanning segments follow: residues 386 to 406 (IMVAVTLVLGAGDFALTLGGF) and 407 to 427 (TLGGIGTATFGAILLNALLSR). Topologically, residues 428 to 442 (KLVDVPPPEVVHQEP) are cytoplasmic.

This sequence belongs to the nucleobase:cation symporter-2 (NCS2) (TC 2.A.40) family.

Its subcellular location is the cell inner membrane. Its function is as follows. May function as a proton-driven pyrimidine uptake system. This Escherichia coli (strain K12) protein is Putative pyrimidine permease RutG (rutG).